The sequence spans 113 residues: Large ribosomal subunit protein bL19 (113 aa).

Belongs to the bacterial ribosomal protein bL19 family.

Its function is as follows. This protein is located at the 30S-50S ribosomal subunit interface and may play a role in the structure and function of the aminoacyl-tRNA binding site. This is Large ribosomal subunit protein bL19 from Mycobacterium marinum (strain ATCC BAA-535 / M).